Consider the following 206-residue polypeptide: Large ribosomal subunit protein eL13 (206 aa).

Basic and acidic residues predominate over residues 184 to 193 (EKTNQKWDGK). Positions 184–206 (EKTNQKWDGKRKAKAQAAAEPKA) are disordered.

It belongs to the eukaryotic ribosomal protein eL13 family.

This is Large ribosomal subunit protein eL13 (RPL13) from Tetrahymena thermophila (strain SB210).